Here is a 467-residue protein sequence, read N- to C-terminus: MAELRAPSSLSTERNGSASNTDVDKQKLNHLYQNGNKKTGSAESRMLVLAETIRAETQKLHAYLESNGIAQPDLSVDAPDDFPPLPDEIQESRQKIFLASRELTDIVRGPRETVRYAVWSYLDTLSLQLINSYGIAKLVPLDAPIKLTELQSKTPLEPVHLARALRHAMTNNIFREPSPGYIAHTSSSRILAQDPALQAWVGFNSEDAFPAAGHVLQALKDHPEAISSTHAGFNYAFNTVGQEPMFATLGKDLARAKRFAQAMHSFSHGEGYKVSYFVDNYDLSEVDKRGGTFVDIGGSHGFVSVELAKRWKDMKFIVEDLPKTIESAPQPISDDKTVADRISLQAHDFFQEQPVKGADVYFFRWIIHNHAKPYAVSILRNLIPALKPGARVVINDYCIREAGSENAWDEKLLRNMDMIMGALLNAQEREEWEFRELFEAADPRFKFKGVQRVENCKMSVIEAVWDE.

The segment at 1–41 (MAELRAPSSLSTERNGSASNTDVDKQKLNHLYQNGNKKTGS) is disordered. Composition is skewed to polar residues over residues 8–21 (SSLS…ASNT) and 31–41 (LYQNGNKKTGS). Asp-320 provides a ligand contact to S-adenosyl-L-methionine. His-368 acts as the Proton acceptor in catalysis.

It belongs to the class I-like SAM-binding methyltransferase superfamily. Cation-independent O-methyltransferase family.

It catalyses the reaction 2,4,6-trichlorophenol + S-adenosyl-L-methionine = 2,4,6-trichloroanisole + S-adenosyl-L-homocysteine. Its activity is regulated as follows. S-adenosyl-L-homocysteine acts as a competitive inhibitor. Also strongly inhibited by low concentrations of several metal ions, such as Cu(2+), Hg(2+), Zn(2+), and Ag(+), and to a lesser extent by p-chloromercuribenzoic acid, but it is not significantly affected by several thiols or other thiol reagents. Functionally, chlorophenol O-methyltransferase that methylates chlorophenols into chloroanisoles which are thought to be responsible for cork taint of wines. The only single chlorophenol (CP) methylated is 2-CP; neither 3-CP nor 4-CP are effective substrates. Within the dichlorophenols (DCPs), 2,4-DCP supports the highest rate of O-methylation, and the activity decreases in the following order: 2,3-DCP, 2,5-DCP, 2,6-DCP, and 3,4-DCP. Within the trichlorophenol (TCP) group, the maximal activity is observed with 2,3,4-TCP, whereas there is increasingly reduced activity with 2,4,5-TCP, 2,4,6-TCP, and 2,3,6-TCP. The only tetrachlorophenol (TeCP) that is methylated is 2,3,4,5-TeCP, since no activity can be detected with 2,3,4,6-TeCP and 2,3,5,6-TeCP. Is also able to methylate other halogenated phenols containing fluoro or bromo substituents, whereas other hydroxylated compounds, such as hydroxylated benzoic acids, hydroxybenzaldehydes, phenol, 2-metoxyphenol, and dihydroxybenzene, were not methylated. The sequence is that of Chlorophenol O-methyltransferase from Trichoderma longibrachiatum.